A 60-amino-acid chain; its full sequence is Cytotoxin 5 (60 aa).

Disulfide bonds link Cys3–Cys21, Cys14–Cys38, Cys42–Cys53, and Cys54–Cys59.

Belongs to the three-finger toxin family. Short-chain subfamily. Type IA cytotoxin sub-subfamily. Monomer in solution; Homodimer and oligomer in the presence of negatively charged lipids forming a pore with a size ranging between 20 and 30 Angstroms. Expressed by the venom gland.

It localises to the secreted. The protein resides in the target cell membrane. Functionally, basic protein that binds to cell membrane and depolarizes cardiomyocytes. It also possesses lytic activity on many other cells, including red blood cells. Interaction with sulfatides in the cell membrane induces pore formation and cell internalization and is responsible for cytotoxicity in cardiomyocytes. It targets the mitochondrial membrane and induces mitochondrial swelling and fragmentation. Inhibits protein kinases C. It binds to the integrin alpha-V/beta-3 with a moderate affinity. Is cardiotoxic and cytocidal to Yoshida sarcoma cells. In Naja atra (Chinese cobra), this protein is Cytotoxin 5.